The following is a 156-amino-acid chain: rRNA methyltransferase (156 aa).

Its function is as follows. Modifies 16S rRNA so making ribosomes resistant to certain aminoglycosides. This chain is rRNA methyltransferase (kamC), found in Saccharopolyspora hirsuta.